We begin with the raw amino-acid sequence, 204 residues long: Large ribosomal subunit protein eL15 (204 aa).

The protein belongs to the eukaryotic ribosomal protein eL15 family.

This is Large ribosomal subunit protein eL15 (RpL15) from Chironomus tentans (Midge).